The primary structure comprises 319 residues: MSDNTLVSDYGMCEEEQVARIAWFYYHDGLTQSEISERLGLTRLKVSRLLEKGHQSGIIRVQINSRFEGCLEYENALRNHFALQNIRVLPALPDADIGLRLGIGAAHMLMESLRPQQLLAVGFGEATMTTLKRLSGFISAQQIRLVTLSGGVGPYMTGIGQLDAACSVSIMPAPLRASSQEIACTLRNENSVRDVMLTAQAADAAIVGIGAINQKDQASILKSGYITQGEQLMIGRKGAVGDILGYFFDAHGEIIPDIKIHNELIGLKLNSLSTIPTVIGVAGGEQKAEAIIAAMRGNYINALVTDQKTAGKIIQIIEK.

The segment at residues 32-55 (QSEISERLGLTRLKVSRLLEKGHQ) is a DNA-binding region (H-T-H motif).

The protein belongs to the SorC transcriptional regulatory family.

It localises to the cytoplasm. With respect to regulation, inactivated by phosphorylated autoinducer-2 (phospho-AI-2). Phospho-AI-2 acts by binding to LsrR, which is then unable to bind to the promoter regions, allowing the transcription of the target genes. Functionally, transcriptional regulator that represses the expression of the lsr operon (lsrACDBFGE) in the absence of the quorum-sensing signaling molecule autoinducer 2 (AI-2). It also represses the expression of the lsrRK operon. Acts by binding to the intergenic region between the lsr operon and lsrR. In the presence of phosphorylated autoinducer-2 (phospho-AI-2), LsrR is inactivated, leading to the transcription of the genes. The regulatory function of LsrR was thought to be limited to the lsr operon, but it was subsequently shown to be involved, directly or indirectly, in the regulation of SPI-1 and flagella genes. It negatively regulates the expression of those genes, which reduces the ability of Salmonella to invade host cells. This Salmonella typhimurium (strain LT2 / SGSC1412 / ATCC 700720) protein is Transcriptional regulator LsrR.